Reading from the N-terminus, the 304-residue chain is Serine protease 30 (304 aa).

Positions 1–21 (MESWARCIFLLLLQILTGGRG) are cleaved as a signal peptide. A propeptide spans 22–30 (DILHSGAGK) (activation peptide). In terms of domain architecture, Peptidase S1 spans 31–271 (IVGGQDAPEG…YVDWIQRTLA (241 aa)). A disulfide bond links C57 and C73. The active-site Charge relay system is the H72. N-linked (GlcNAc...) asparagine glycosylation is present at N79. Residue D122 is the Charge relay system of the active site. Intrachain disulfides connect C155–C229, C185–C208, and C219–C247. S223 functions as the Charge relay system in the catalytic mechanism. N-linked (GlcNAc...) asparagine glycans are attached at residues N232 and N273. The GPI-anchor amidated serine moiety is linked to residue S275. Residues 276 to 304 (DAYGCRSRASGAYPALLLVLLAFALPESL) constitute a propeptide, removed in mature form.

It belongs to the peptidase S1 family. Expressed predominantly in kidney, small intestine and stomach and moderately in thymus, lung, spleen, testis and skin. In the kidney, expressed mainly in collecting duct of renal medulla and cortex.

Its subcellular location is the cell membrane. Its activity is regulated as follows. Inhibited by aprotinin, leupeptin, benzamidine and soybean trypsin inhibitor. Partially inhibited by PMSF and DFP. Functionally, selectively cleaves synthetic peptide substrates of trypsin. Activates the epithelial sodium channel ENaC. The chain is Serine protease 30 (Prss30) from Rattus norvegicus (Rat).